Consider the following 466-residue polypeptide: Asparagine--tRNA ligase (466 aa).

It belongs to the class-II aminoacyl-tRNA synthetase family. In terms of assembly, homodimer.

The protein localises to the cytoplasm. The catalysed reaction is tRNA(Asn) + L-asparagine + ATP = L-asparaginyl-tRNA(Asn) + AMP + diphosphate + H(+). The sequence is that of Asparagine--tRNA ligase from Shewanella halifaxensis (strain HAW-EB4).